Consider the following 288-residue polypeptide: Glucose-1-phosphate thymidylyltransferase (288 aa).

DTDP-alpha-D-glucose is bound at residue glycine 8. The dTTP site is built by glycine 8, glycine 11, threonine 12, arginine 13, lysine 23, glutamine 24, glutamine 80, glycine 85, and aspartate 108. Lysine 23, glutamine 24, glutamine 80, glycine 85, aspartate 108, asparagine 109, glycine 143, glutamate 158, lysine 159, valine 169, and aspartate 222 together coordinate dTDP-alpha-D-glucose. Aspartate 108 contacts Mg(2+). Aspartate 222 is a Mg(2+) binding site.

Belongs to the glucose-1-phosphate thymidylyltransferase family. Mg(2+) serves as cofactor.

The enzyme catalyses dTTP + alpha-D-glucose 1-phosphate + H(+) = dTDP-alpha-D-glucose + diphosphate. It functions in the pathway carbohydrate biosynthesis; dTDP-L-rhamnose biosynthesis. Its function is as follows. Catalyzes the conversion of glucose-1-phosphate and dTTP to dTDP-glucose and pyrophosphate. Involved in the biosynthesis of the dTDP-L-rhamnose which is a component of the critical linker, D-N-acetylglucosamine-L-rhamnose disaccharide, which connects the galactan region of arabinogalactan to peptidoglycan via a phosphodiester linkage. The chain is Glucose-1-phosphate thymidylyltransferase (rmlA) from Mycolicibacterium smegmatis (strain ATCC 700084 / mc(2)155) (Mycobacterium smegmatis).